We begin with the raw amino-acid sequence, 156 residues long: Small ribosomal subunit protein uS7 (156 aa).

Belongs to the universal ribosomal protein uS7 family. In terms of assembly, part of the 30S ribosomal subunit. Contacts proteins S9 and S11.

Its function is as follows. One of the primary rRNA binding proteins, it binds directly to 16S rRNA where it nucleates assembly of the head domain of the 30S subunit. Is located at the subunit interface close to the decoding center, probably blocks exit of the E-site tRNA. The protein is Small ribosomal subunit protein uS7 of Staphylococcus saprophyticus subsp. saprophyticus (strain ATCC 15305 / DSM 20229 / NCIMB 8711 / NCTC 7292 / S-41).